A 703-amino-acid chain; its full sequence is Polyribonucleotide nucleotidyltransferase (703 aa).

Aspartate 489 and aspartate 495 together coordinate Mg(2+). Positions 556–615 (PTMIAMKIDTDKIRDVIGKGGATIRAICEETKASIDIEDDGSIKIFGETKEAAEAARQRV) constitute a KH domain. An S1 motif domain is found at 625 to 693 (GKIYVGKVER…NRGRIKLSIK (69 aa)).

This sequence belongs to the polyribonucleotide nucleotidyltransferase family. Component of the RNA degradosome, which is a multiprotein complex involved in RNA processing and mRNA degradation. It depends on Mg(2+) as a cofactor.

It is found in the cytoplasm. The enzyme catalyses RNA(n+1) + phosphate = RNA(n) + a ribonucleoside 5'-diphosphate. In terms of biological role, involved in mRNA degradation. Catalyzes the phosphorolysis of single-stranded polyribonucleotides processively in the 3'- to 5'-direction. In Pseudomonas fluorescens (strain ATCC BAA-477 / NRRL B-23932 / Pf-5), this protein is Polyribonucleotide nucleotidyltransferase.